The following is a 358-amino-acid chain: Tubulin-like protein TubZ (358 aa).

GDP contacts are provided by residues 12–16 (QGGGN), threonine 95, 99–101 (GTG), glutamate 132, asparagine 164, glutamate 170, and asparagine 174. Residue asparagine 182 participates in GTP binding.

Belongs to the FtsZ family. TubZ subfamily. In terms of assembly, monomer. In the presence of Mg(2+) and GTP assembles into 2-stranded filaments which coalesce into bundles. Binds a centromere-like site (tubC)-TubR complex. The TubZ-TubR-tubC complex bind to TubY which reshapes the filament bundles into rings. A later paper by the same group shows 4-stranded filament formation and suggests the 2-stranded form is a short-lived intermediate.

It is found in the host cytoplasm. It carries out the reaction GTP + H2O = GDP + phosphate + H(+). A tubulin-like, filament forming GTPase; the motor component of the type III partition system presumably used to ensure correct segregation of this bacteriophage. In the presence of Mg(2+) and GTP (or GTP-gamma-S) assembles into filaments which upon polymerization are almost exclusively bound to GDP. Filament formation is cooperative, requiring a critical concentration. Formation occurs very quickly and is followed by disassembly as GTP is consumed. Unlike its plasmid homolog in B.thuringiensis (AC Q8KNP3) GTP-gamma-S does not alter filament formation. When forced to assemble with GDP instead of GTP it makes much stiffer, thicker filaments. The filaments bind a DNA centromere-like site (tubC)-TubR complex which extends to surround the TubZ filaments. Highly dynamic filaments grow at the plus end and depolymerize at the minus end, a process called treadmilling. TubR-tubC complexes track the depolymerizing minus end of the filament, probably pulling phage DNA within the cell. This is Tubulin-like protein TubZ from Clostridium botulinum C phage (Clostridium botulinum C bacteriophage).